Here is a 270-residue protein sequence, read N- to C-terminus: Putative pyruvate, phosphate dikinase regulatory protein 2 (270 aa).

151–158 contacts ADP; it reads GVSRTSKT.

Belongs to the pyruvate, phosphate/water dikinase regulatory protein family. PDRP subfamily.

The enzyme catalyses N(tele)-phospho-L-histidyl/L-threonyl-[pyruvate, phosphate dikinase] + ADP = N(tele)-phospho-L-histidyl/O-phospho-L-threonyl-[pyruvate, phosphate dikinase] + AMP + H(+). The catalysed reaction is N(tele)-phospho-L-histidyl/O-phospho-L-threonyl-[pyruvate, phosphate dikinase] + phosphate + H(+) = N(tele)-phospho-L-histidyl/L-threonyl-[pyruvate, phosphate dikinase] + diphosphate. Bifunctional serine/threonine kinase and phosphorylase involved in the regulation of the pyruvate, phosphate dikinase (PPDK) by catalyzing its phosphorylation/dephosphorylation. This is Putative pyruvate, phosphate dikinase regulatory protein 2 from Listeria innocua serovar 6a (strain ATCC BAA-680 / CLIP 11262).